A 294-amino-acid chain; its full sequence is Lipoyl synthase (294 aa).

[4Fe-4S] cluster-binding residues include C35, C40, C46, C61, C65, C68, and S273. One can recognise a Radical SAM core domain in the interval 47–262; that stretch reads FRQRQATFLI…REQALSMGFE (216 aa).

The protein belongs to the radical SAM superfamily. Lipoyl synthase family. [4Fe-4S] cluster is required as a cofactor.

Its subcellular location is the cytoplasm. The enzyme catalyses [[Fe-S] cluster scaffold protein carrying a second [4Fe-4S](2+) cluster] + N(6)-octanoyl-L-lysyl-[protein] + 2 oxidized [2Fe-2S]-[ferredoxin] + 2 S-adenosyl-L-methionine + 4 H(+) = [[Fe-S] cluster scaffold protein] + N(6)-[(R)-dihydrolipoyl]-L-lysyl-[protein] + 4 Fe(3+) + 2 hydrogen sulfide + 2 5'-deoxyadenosine + 2 L-methionine + 2 reduced [2Fe-2S]-[ferredoxin]. It participates in protein modification; protein lipoylation via endogenous pathway; protein N(6)-(lipoyl)lysine from octanoyl-[acyl-carrier-protein]: step 2/2. Catalyzes the radical-mediated insertion of two sulfur atoms into the C-6 and C-8 positions of the octanoyl moiety bound to the lipoyl domains of lipoate-dependent enzymes, thereby converting the octanoylated domains into lipoylated derivatives. The protein is Lipoyl synthase of Geotalea daltonii (strain DSM 22248 / JCM 15807 / FRC-32) (Geobacter daltonii).